The primary structure comprises 256 residues: Enkurin (256 aa).

Residues 83–89 (PKKPAVP) carry the SH3-binding motif. An Enkurin domain is found at 160 to 252 (KRNEEIKKAQ…IIEKHKIIYI (93 aa)). Residues 160–255 (KRNEEIKKAQ…KHKIIYIANN (96 aa)) are interaction with TRPC proteins. The IQ domain maps to 176–187 (IQENLKKAAMKR).

Microtubule inner protein component of sperm flagellar doublet microtubules. Binds calmodulin via its IQ domain. Interacts with TRPC1, TRPC2, TRPC5, but not TRPC3. Interacts with CFAP45. In terms of tissue distribution, expressed in airway epithelial cells.

The protein resides in the cytoplasm. The protein localises to the cytoskeleton. Its subcellular location is the cilium axoneme. It is found in the flagellum axoneme. Functionally, adapter that functions to localize a calcium-sensitive signal transduction machinery in sperm to a calcium-permeable ion channel. Microtubule inner protein (MIP) part of the dynein-decorated doublet microtubules (DMTs) in cilia axoneme, which is required for motile cilia beating. The chain is Enkurin from Homo sapiens (Human).